Here is a 643-residue protein sequence, read N- to C-terminus: 1-deoxy-D-xylulose-5-phosphate synthase (643 aa).

Thiamine diphosphate contacts are provided by residues His-78 and 119–121; that span reads AHS. Asp-150 is a Mg(2+) binding site. Thiamine diphosphate contacts are provided by residues 151–152, Asn-179, Tyr-288, and Glu-370; that span reads GS. Asn-179 contacts Mg(2+).

This sequence belongs to the transketolase family. DXPS subfamily. As to quaternary structure, homodimer. Mg(2+) is required as a cofactor. Requires thiamine diphosphate as cofactor.

The catalysed reaction is D-glyceraldehyde 3-phosphate + pyruvate + H(+) = 1-deoxy-D-xylulose 5-phosphate + CO2. It participates in metabolic intermediate biosynthesis; 1-deoxy-D-xylulose 5-phosphate biosynthesis; 1-deoxy-D-xylulose 5-phosphate from D-glyceraldehyde 3-phosphate and pyruvate: step 1/1. Functionally, catalyzes the acyloin condensation reaction between C atoms 2 and 3 of pyruvate and glyceraldehyde 3-phosphate to yield 1-deoxy-D-xylulose-5-phosphate (DXP). The protein is 1-deoxy-D-xylulose-5-phosphate synthase of Brucella abortus (strain S19).